Here is a 292-residue protein sequence, read N- to C-terminus: Formamidopyrimidine-DNA glycosylase (292 aa).

The Schiff-base intermediate with DNA role is filled by proline 2. Glutamate 3 serves as the catalytic Proton donor. Lysine 61 serves as the catalytic Proton donor; for beta-elimination activity. Histidine 96, arginine 115, and lysine 161 together coordinate DNA. The FPG-type zinc-finger motif lies at 247 to 281; that stretch reads SAYGQEDRPCPRCGTAIRREKFMNRSSFSCPKCQP. Arginine 271 serves as the catalytic Proton donor; for delta-elimination activity.

This sequence belongs to the FPG family. Monomer. Requires Zn(2+) as cofactor.

It catalyses the reaction Hydrolysis of DNA containing ring-opened 7-methylguanine residues, releasing 2,6-diamino-4-hydroxy-5-(N-methyl)formamidopyrimidine.. It carries out the reaction 2'-deoxyribonucleotide-(2'-deoxyribose 5'-phosphate)-2'-deoxyribonucleotide-DNA = a 3'-end 2'-deoxyribonucleotide-(2,3-dehydro-2,3-deoxyribose 5'-phosphate)-DNA + a 5'-end 5'-phospho-2'-deoxyribonucleoside-DNA + H(+). Involved in base excision repair of DNA damaged by oxidation or by mutagenic agents. Acts as a DNA glycosylase that recognizes and removes damaged bases. Has a preference for oxidized purines, such as 7,8-dihydro-8-oxoguanine (8-oxoG). Has AP (apurinic/apyrimidinic) lyase activity and introduces nicks in the DNA strand. Cleaves the DNA backbone by beta-delta elimination to generate a single-strand break at the site of the removed base with both 3'- and 5'-phosphates. The polypeptide is Formamidopyrimidine-DNA glycosylase (Rhodococcus jostii (strain RHA1)).